The chain runs to 78 residues: U-scoloptoxin(04)-Er1a (78 aa).

The N-terminal stretch at 1–24 is a signal peptide; sequence MTRHLIFAAVLLVCLFVCWNAIGA. A propeptide spanning residues 25–28 is cleaved from the precursor; sequence QDAR.

The protein belongs to the scoloptoxin-04 family. Contains 2 disulfide bonds. Expressed by the venom gland.

The protein resides in the secreted. The chain is U-scoloptoxin(04)-Er1a from Ethmostigmus rubripes (Giant centipede).